Reading from the N-terminus, the 146-residue chain is MCHTSCSSGCQPACCAPSPCQPACCVPSSCQASCCVPVGCQSSVCVPVSFKPAVCLPVSCQSSVCVPMSFKSAVCVPVSCQSSVCVPVSCRPIVCAAPSCQSSLCVPVSCRPVVYAAPSCQSSGCCQPSCTSVLCRPISYSISSCC.

Tandem repeats lie at residues 10-14 (CQPAC), 15-19 (CAPSP), 20-24 (CQPAC), 25-29 (CVPSS), 34-38 (CCVPV), 40-44 (CQSSV), 45-49 (CVPVS), 55-59 (CLPVS), 60-64 (CQSSV), 65-69 (CVPMS), 70-74 (FKSAV), 75-79 (CVPVS), 80-84 (CQSSV), 85-89 (CVPVS), 90-94 (CRPIV), 95-99 (CAAPS), 100-104 (CQSSL), 105-109 (CVPVS), 110-114 (CRPVV), 120-124 (CQSSG), 125-129 (CCQPS), 130-134 (CTSVL), and 135-139 (CRPIS). Positions 10 to 139 (CQPACCAPSP…CTSVLCRPIS (130 aa)) are 23 X 5 AA approximate repeats.

The protein belongs to the KRTAP type 12 family. In terms of assembly, interacts with hair keratins. As to expression, restricted to a narrow region of the hair fiber cuticle, lying approximately 20 cell layers above the apex of the dermal papilla of the hair root; not detected in any other tissues.

In the hair cortex, hair keratin intermediate filaments are embedded in an interfilamentous matrix, consisting of hair keratin-associated proteins (KRTAP), which are essential for the formation of a rigid and resistant hair shaft through their extensive disulfide bond cross-linking with abundant cysteine residues of hair keratins. The matrix proteins include the high-sulfur and high-glycine-tyrosine keratins. The polypeptide is Keratin-associated protein 12-2 (KRTAP12-2) (Homo sapiens (Human)).